Here is a 707-residue protein sequence, read N- to C-terminus: Polyribonucleotide nucleotidyltransferase (707 aa).

Mg(2+)-binding residues include Asp488 and Asp494. The 61-residue stretch at 555-615 (PIIKVTKIDP…ENVDNAIALI (61 aa)) folds into the KH domain. Positions 625–692 (GEILEGKITR…DLGRLQFKRV (68 aa)) constitute an S1 motif domain.

This sequence belongs to the polyribonucleotide nucleotidyltransferase family. Requires Mg(2+) as cofactor.

Its subcellular location is the cytoplasm. It carries out the reaction RNA(n+1) + phosphate = RNA(n) + a ribonucleoside 5'-diphosphate. In terms of biological role, involved in mRNA degradation. Catalyzes the phosphorolysis of single-stranded polyribonucleotides processively in the 3'- to 5'-direction. The protein is Polyribonucleotide nucleotidyltransferase of Thermotoga neapolitana (strain ATCC 49049 / DSM 4359 / NBRC 107923 / NS-E).